Consider the following 134-residue polypeptide: Perlwapin (134 aa).

3 WAP domains span residues 2–45 (GPNL…CVPK), 46–89 (PKPG…YRPE), and 90–132 (KPGS…EKPC). Intrachain disulfides connect C8–C34, C17–C38, C21–C33, C27–C42, C51–C77, C59–C82, C64–C76, C70–C85, C94–C121, C104–C124, C108–C120, and C114–C128.

In terms of tissue distribution, nacreous layer of shell.

Functionally, inhibits growth of calcium carbonate crystals. May inhibit growth of certain crystallographic planes in the mineral phase of nacre in the shell. In Haliotis laevigata (Smooth Australian abalone), this protein is Perlwapin.